The following is a 487-amino-acid chain: Serine carboxypeptidase-like 38 (487 aa).

The signal sequence occupies residues 1–20 (MGKQQDWSVTACIFLSLSLA). 3 disulfide bridges follow: C119/C368, C280/C290, and C315/C336. S215 is an active-site residue. N233 is a glycosylation site (N-linked (GlcNAc...) asparagine). Residues N317 and N357 are each glycosylated (N-linked (GlcNAc...) asparagine). The active site involves D407. 2 N-linked (GlcNAc...) asparagine glycosylation sites follow: N423 and N449. The active site involves H460.

Belongs to the peptidase S10 family. Expressed in seedlings, roots, leaves, flowers and siliques.

It is found in the secreted. Probable carboxypeptidase. The protein is Serine carboxypeptidase-like 38 (SCPL38) of Arabidopsis thaliana (Mouse-ear cress).